Here is a 347-residue protein sequence, read N- to C-terminus: D-alanine--D-alanine ligase (347 aa).

Residues 133-342 (KQAFAQASLP…FPDLVHRLIQ (210 aa)) form the ATP-grasp domain. Residue 169 to 224 (ETELGYPCFVKPANLGSSVGIAKVRDRAELEAALDQAAALDRRLIIEAAIDNPREV) participates in ATP binding. Mg(2+) is bound by residues Asp296, Glu309, and Asn311.

This sequence belongs to the D-alanine--D-alanine ligase family. Mg(2+) serves as cofactor. The cofactor is Mn(2+).

It is found in the cytoplasm. The catalysed reaction is 2 D-alanine + ATP = D-alanyl-D-alanine + ADP + phosphate + H(+). It functions in the pathway cell wall biogenesis; peptidoglycan biosynthesis. Cell wall formation. The sequence is that of D-alanine--D-alanine ligase from Synechococcus elongatus (strain ATCC 33912 / PCC 7942 / FACHB-805) (Anacystis nidulans R2).